The following is a 240-amino-acid chain: uncharacterized protein (240 aa).

It is found in the mitochondrion. This is an uncharacterized protein from Arabidopsis thaliana (Mouse-ear cress).